The primary structure comprises 278 residues: Sulfur carrier protein FdhD (278 aa).

Catalysis depends on cysteine 121, which acts as the Cysteine persulfide intermediate. 260 to 265 (FCKPGR) provides a ligand contact to Mo-bis(molybdopterin guanine dinucleotide).

Belongs to the FdhD family.

The protein resides in the cytoplasm. In terms of biological role, required for formate dehydrogenase (FDH) activity. Acts as a sulfur carrier protein that transfers sulfur from IscS to the molybdenum cofactor prior to its insertion into FDH. This Salmonella choleraesuis (strain SC-B67) protein is Sulfur carrier protein FdhD.